We begin with the raw amino-acid sequence, 476 residues long: Ribosomal RNA small subunit methyltransferase F (476 aa).

Residues 125–131 (AAAPGSK), glutamate 149, aspartate 176, and aspartate 194 contribute to the S-adenosyl-L-methionine site. Cysteine 247 functions as the Nucleophile in the catalytic mechanism.

Belongs to the class I-like SAM-binding methyltransferase superfamily. RsmB/NOP family.

It localises to the cytoplasm. The catalysed reaction is cytidine(1407) in 16S rRNA + S-adenosyl-L-methionine = 5-methylcytidine(1407) in 16S rRNA + S-adenosyl-L-homocysteine + H(+). Functionally, specifically methylates the cytosine at position 1407 (m5C1407) of 16S rRNA. The polypeptide is Ribosomal RNA small subunit methyltransferase F (Aeromonas salmonicida (strain A449)).